A 295-amino-acid chain; its full sequence is MDQKQIEEIVRSVMASMGQAAPAPSEAKCATTTCAAPVTSESCALDLGSAEAKAWIGVENPHRADVLTELRRSTVARVCTGRAGPRPRTQALLRFLADHSRSKDTVLKEVPEEWVKAQGLLEVRSEISDKNLYLTRPDMGRRLCAEAVEALKAQCVANPDVQVVISDGLSTDAITVNYEEILPPLMAGLKQAGLKVGTPFFVRYGRVKIEDQIGEILGAKVVILLVGERPGLGQSESLSCYAVYSPRMATTVEADRTCISNIHQGGTPPVEAAAVIVDLAKRMLEQKASGINMTR.

Adenosylcob(III)alamin contacts are provided by Val-207, Glu-228, and Cys-258.

The protein belongs to the EutC family. The basic unit is a heterodimer which dimerizes to form tetramers. The heterotetramers trimerize; 6 large subunits form a core ring with 6 small subunits projecting outwards. Adenosylcob(III)alamin is required as a cofactor.

The protein localises to the bacterial microcompartment. It catalyses the reaction ethanolamine = acetaldehyde + NH4(+). It functions in the pathway amine and polyamine degradation; ethanolamine degradation. Functionally, catalyzes the deamination of various vicinal amino-alcohols to oxo compounds. Allows this organism to utilize ethanolamine as the sole source of nitrogen and carbon in the presence of external vitamin B12. The sequence is that of Ethanolamine ammonia-lyase small subunit from Escherichia coli O7:K1 (strain IAI39 / ExPEC).